Here is a 381-residue protein sequence, read N- to C-terminus: Succinyl-diaminopimelate desuccinylase (381 aa).

Residue H68 coordinates Zn(2+). Residue D70 is part of the active site. Residue D101 coordinates Zn(2+). The active-site Proton acceptor is the E135. Residues E136, E164, and H350 each coordinate Zn(2+).

This sequence belongs to the peptidase M20A family. DapE subfamily. Homodimer. Requires Zn(2+) as cofactor. The cofactor is Co(2+).

The catalysed reaction is N-succinyl-(2S,6S)-2,6-diaminopimelate + H2O = (2S,6S)-2,6-diaminopimelate + succinate. The protein operates within amino-acid biosynthesis; L-lysine biosynthesis via DAP pathway; LL-2,6-diaminopimelate from (S)-tetrahydrodipicolinate (succinylase route): step 3/3. Functionally, catalyzes the hydrolysis of N-succinyl-L,L-diaminopimelic acid (SDAP), forming succinate and LL-2,6-diaminopimelate (DAP), an intermediate involved in the bacterial biosynthesis of lysine and meso-diaminopimelic acid, an essential component of bacterial cell walls. The chain is Succinyl-diaminopimelate desuccinylase from Neisseria meningitidis serogroup C / serotype 2a (strain ATCC 700532 / DSM 15464 / FAM18).